Reading from the N-terminus, the 439-residue chain is Xylose isomerase (439 aa).

Catalysis depends on residues H103 and D106. Residues E234, E270, H273, D298, D309, D311, and D341 each contribute to the Mg(2+) site.

The protein belongs to the xylose isomerase family. As to quaternary structure, homotetramer. It depends on Mg(2+) as a cofactor.

It is found in the cytoplasm. It catalyses the reaction alpha-D-xylose = alpha-D-xylulofuranose. This chain is Xylose isomerase, found in Bacteroides fragilis (strain ATCC 25285 / DSM 2151 / CCUG 4856 / JCM 11019 / LMG 10263 / NCTC 9343 / Onslow / VPI 2553 / EN-2).